Consider the following 179-residue polypeptide: Ribosome maturation factor RimM (179 aa).

The region spanning 101 to 179 (EGEVYVHDLC…VELMHRWILE (79 aa)) is the PRC barrel domain.

Belongs to the RimM family. Binds ribosomal protein uS19.

Its subcellular location is the cytoplasm. In terms of biological role, an accessory protein needed during the final step in the assembly of 30S ribosomal subunit, possibly for assembly of the head region. Essential for efficient processing of 16S rRNA. May be needed both before and after RbfA during the maturation of 16S rRNA. It has affinity for free ribosomal 30S subunits but not for 70S ribosomes. The protein is Ribosome maturation factor RimM of Treponema denticola (strain ATCC 35405 / DSM 14222 / CIP 103919 / JCM 8153 / KCTC 15104).